Consider the following 294-residue polypeptide: Putative HTH-type transcriptional regulatory protein STK_12680 (294 aa).

The 53-residue stretch at 123 to 175 (LKKKREEMGLSLGEVAQALGVSRISIYDYEREDSYVSIDIAEKLVELFGDDIL) folds into the HTH cro/C1-type domain. The segment at residues 134–153 (LGEVAQALGVSRISIYDYER) is a DNA-binding region (H-T-H motif).

This chain is Putative HTH-type transcriptional regulatory protein STK_12680, found in Sulfurisphaera tokodaii (strain DSM 16993 / JCM 10545 / NBRC 100140 / 7) (Sulfolobus tokodaii).